Reading from the N-terminus, the 307-residue chain is Malate dehydrogenase (307 aa).

NAD(+)-binding positions include 8–13 and Asp-32; that span reads GAGNVG. The substrate site is built by Arg-81 and Arg-87. NAD(+) contacts are provided by residues Asn-94 and 117-119; that span reads VSN. Substrate is bound by residues Asn-119 and Arg-150. The active-site Proton acceptor is His-174.

It belongs to the LDH/MDH superfamily. MDH type 3 family.

It catalyses the reaction (S)-malate + NAD(+) = oxaloacetate + NADH + H(+). Its function is as follows. Catalyzes the reversible oxidation of malate to oxaloacetate. The protein is Malate dehydrogenase of Dehalococcoides mccartyi (strain CBDB1).